The primary structure comprises 324 residues: Lactonase drp35 (324 aa).

Residues E47, S109, G111, D129, T132, Y134, D137, N184, D235, and S236 each contribute to the Ca(2+) site. The active-site Proton donor is D235.

It belongs to the SMP-30/CGR1 family. Ca(2+) serves as cofactor.

It is found in the cytoplasm. Exhibits lactonase activity. Acts in cells with perturbed membrane integrity and is possibly related to the membrane homeostasis. The sequence is that of Lactonase drp35 (drp35) from Staphylococcus aureus (strain MRSA252).